The sequence spans 479 residues: Sulfate adenylyltransferase subunit 1 (479 aa).

In terms of domain architecture, tr-type G spans 22–238 (KDMLRFLTCG…DSMDISKEPK (217 aa)). The interval 31–38 (GSVDDGKS) is G1. 31 to 38 (GSVDDGKS) provides a ligand contact to GTP. The interval 89–93 (GITID) is G2. Positions 110–113 (DTPG) are G3. GTP contacts are provided by residues 110–114 (DTPGH) and 165–168 (NKMD). The tract at residues 165–168 (NKMD) is G4. Residues 202-204 (SAL) form a G5 region.

It belongs to the TRAFAC class translation factor GTPase superfamily. Classic translation factor GTPase family. CysN/NodQ subfamily. As to quaternary structure, heterodimer composed of CysD, the smaller subunit, and CysN.

The catalysed reaction is sulfate + ATP + H(+) = adenosine 5'-phosphosulfate + diphosphate. It participates in sulfur metabolism; hydrogen sulfide biosynthesis; sulfite from sulfate: step 1/3. Functionally, with CysD forms the ATP sulfurylase (ATPS) that catalyzes the adenylation of sulfate producing adenosine 5'-phosphosulfate (APS) and diphosphate, the first enzymatic step in sulfur assimilation pathway. APS synthesis involves the formation of a high-energy phosphoric-sulfuric acid anhydride bond driven by GTP hydrolysis by CysN coupled to ATP hydrolysis by CysD. The sequence is that of Sulfate adenylyltransferase subunit 1 from Sulfurovum sp. (strain NBC37-1).